Consider the following 136-residue polypeptide: Large ribosomal subunit protein uL16 (136 aa).

It belongs to the universal ribosomal protein uL16 family. In terms of assembly, part of the 50S ribosomal subunit.

Functionally, binds 23S rRNA and is also seen to make contacts with the A and possibly P site tRNAs. In Actinobacillus succinogenes (strain ATCC 55618 / DSM 22257 / CCUG 43843 / 130Z), this protein is Large ribosomal subunit protein uL16.